The primary structure comprises 144 residues: Large ribosomal subunit protein uL15 (144 aa).

The segment at 1-52 is disordered; sequence MRLNSLSPAEGAKHSAKRLGRGISSGLGKTGGRGHKGQKSRTGGGVRRGFEG.

It belongs to the universal ribosomal protein uL15 family. In terms of assembly, part of the 50S ribosomal subunit.

Its function is as follows. Binds to the 23S rRNA. In Actinobacillus pleuropneumoniae serotype 7 (strain AP76), this protein is Large ribosomal subunit protein uL15.